The following is a 141-amino-acid chain: Large ribosomal subunit protein uL11 (141 aa).

Belongs to the universal ribosomal protein uL11 family. Part of the ribosomal stalk of the 50S ribosomal subunit. Interacts with L10 and the large rRNA to form the base of the stalk. L10 forms an elongated spine to which L12 dimers bind in a sequential fashion forming a multimeric L10(L12)X complex. One or more lysine residues are methylated.

Functionally, forms part of the ribosomal stalk which helps the ribosome interact with GTP-bound translation factors. This chain is Large ribosomal subunit protein uL11, found in Lactobacillus delbrueckii subsp. bulgaricus (strain ATCC 11842 / DSM 20081 / BCRC 10696 / JCM 1002 / NBRC 13953 / NCIMB 11778 / NCTC 12712 / WDCM 00102 / Lb 14).